The sequence spans 809 residues: Lon protease (809 aa).

Residues 42–242 (LVIYPLGGRP…KVLTLLKKEL (201 aa)) form the Lon N-terminal domain. 395–402 (GPPGVGKT) provides a ligand contact to ATP. The Lon proteolytic domain maps to 629 to 809 (LTGVGIVTGL…YAEVAKLVFG (181 aa)). Active-site residues include Ser716 and Lys759.

Belongs to the peptidase S16 family. Homohexamer. Organized in a ring with a central cavity.

Its subcellular location is the cytoplasm. The catalysed reaction is Hydrolysis of proteins in presence of ATP.. ATP-dependent serine protease that mediates the selective degradation of mutant and abnormal proteins as well as certain short-lived regulatory proteins. Required for cellular homeostasis and for survival from DNA damage and developmental changes induced by stress. Degrades polypeptides processively to yield small peptide fragments that are 5 to 10 amino acids long. Binds to DNA in a double-stranded, site-specific manner. The chain is Lon protease from Magnetococcus marinus (strain ATCC BAA-1437 / JCM 17883 / MC-1).